A 153-amino-acid polypeptide reads, in one-letter code: UPF0260 protein CKO_01185 (153 aa).

It belongs to the UPF0260 family.

The polypeptide is UPF0260 protein CKO_01185 (Citrobacter koseri (strain ATCC BAA-895 / CDC 4225-83 / SGSC4696)).